An 84-amino-acid chain; its full sequence is MKVTLIAILTCAAVLVLHTTAAEELEESQLMEVGMPDTELAAVDEERLFECSFSCEIEKEGDKPCKKKKCKGGWKCKFNMCVKV.

Residues 1–22 (MKVTLIAILTCAAVLVLHTTAA) form the signal peptide. Residues 23–48 (EELEESQLMEVGMPDTELAAVDEERL) constitute a propeptide that is removed on maturation. Cystine bridges form between Cys-51–Cys-65, Cys-55–Cys-76, and Cys-70–Cys-81.

This sequence belongs to the neurotoxin 12 (Hwtx-2) family. 02 (Hwtx-2) subfamily. As to expression, expressed by the venom gland.

It is found in the secreted. Functionally, blocks neuromuscular transmission. Acts cooperatively to potentiate the activity of huwentoxin-I. Paralyzes locusts and kills mice following intracerebroventricular injection. This chain is U1-theraphotoxin-Hs1a, found in Cyriopagopus schmidti (Chinese bird spider).